A 179-amino-acid polypeptide reads, in one-letter code: uncharacterized protein (179 aa).

This is an uncharacterized protein from Methanocaldococcus jannaschii (strain ATCC 43067 / DSM 2661 / JAL-1 / JCM 10045 / NBRC 100440) (Methanococcus jannaschii).